Consider the following 650-residue polypeptide: Solute carrier family 23 member 2 (650 aa).

The span at 1–20 (MMGIGKNTTSKSMEAGSSTE) shows a compositional bias: polar residues. The tract at residues 1–21 (MMGIGKNTTSKSMEAGSSTEG) is disordered. Residues 9–110 (TSKSMEAGSS…LCIFLGLQHY (102 aa)) are Cytoplasmic-facing. The residue at position 70 (S70) is a Phosphoserine. A Phosphothreonine modification is found at T75. At S78 the chain carries Phosphoserine. T79 bears the Phosphothreonine mark. At S81 the chain carries Phosphoserine. Residues 111–131 (LTCFSGTIAVPFLLADAMCVG) form a helical membrane-spanning segment. At 132-139 (YDQWATSQ) the chain is on the extracellular side. A helical transmembrane segment spans residues 140–160 (LIGTIFFCVGITTLLQTTFGC). Position 161 (R161) is a topological domain, cytoplasmic. A helical transmembrane segment spans residues 162–182 (LPLFQASAFAFLAPARAILSL). Residues 183–218 (DKWKCNTTDVSVANGTAELLHTEHIWYPRIREIQGA) lie on the Extracellular side of the membrane. N-linked (GlcNAc...) asparagine glycosylation is found at N188 and N196. The helical transmembrane segment at 219–239 (IIMSSLIEVVIGLLGLPGALL) threads the bilayer. The Cytoplasmic portion of the chain corresponds to 240-266 (KYIGPLTITPTVALIGLSGFQAAGERA). Residues 267–284 (GKHWGIAMLTIFLVLLFS) form a helical membrane-spanning segment. Topologically, residues 285–288 (QYAR) are extracellular. The helical intramembrane region spans 289–302 (NVKFPLPIYKSKKG). Residues 303-309 (WTAYKLQ) are Extracellular-facing. The chain crosses the membrane as a helical span at residues 310-330 (LFKMFPIILAILVSWLLCFIF). Over 331–371 (TVTDVFPPDSTKYGFYARTDARQGVLLVAPWFKVPYPFQWG) the chain is Cytoplasmic. A helical transmembrane segment spans residues 372–392 (LPTVSAAGVIGMLSAVVASII). Residues 393 to 417 (ESIGDYYACARLSCAPPPPIHAINR) are Extracellular-facing. A helical membrane pass occupies residues 418 to 438 (GIFVEGLSCVLDGIFGTGNGS). At 439 to 461 (TSSSPNIGVLGITKVGSRRVIQC) the chain is on the cytoplasmic side. A helical membrane pass occupies residues 462 to 482 (GAALMLALGMIGKFSALFASL). Topologically, residues 483–485 (PDP) are extracellular. The helical transmembrane segment at 486–506 (VLGALFCTLFGMITAVGLSNL) threads the bilayer. The Cytoplasmic segment spans residues 507 to 516 (QFIDLNSSRN). A helical membrane pass occupies residues 517-537 (LFVLGFSIFFGLVLPSYLRQN). Topologically, residues 538–547 (PLVTGITGID) are extracellular. Residues 548–568 (QVLNVLLTTAMFVGGCVAFIL) traverse the membrane as a helical segment. Residues 569 to 650 (DNTIPGTPEE…SSDEDSQATG (82 aa)) lie on the Cytoplasmic side of the membrane. T649 bears the Phosphothreonine mark.

It belongs to the nucleobase:cation symporter-2 (NCS2) (TC 2.A.40) family. As to quaternary structure, interacts with CLSTN3. Post-translationally, phosphorylated. As to expression, ubiquitous.

The protein resides in the cell membrane. It carries out the reaction L-ascorbate(out) + 2 Na(+)(out) = L-ascorbate(in) + 2 Na(+)(in). In terms of biological role, sodium/ascorbate cotransporter. Mediates electrogenic uptake of vitamin C, with a stoichiometry of 2 Na(+) for each ascorbate. This is Solute carrier family 23 member 2 (SLC23A2) from Homo sapiens (Human).